A 336-amino-acid polypeptide reads, in one-letter code: Atypical chemokine receptor 1 (336 aa).

Over Met-1–Pro-63 the chain is Extracellular. Residues Asn-16, Asn-27, and Asn-33 are each glycosylated (N-linked (GlcNAc...) asparagine). 2 disulfides stabilise this stretch: Cys-51–Cys-276 and Cys-129–Cys-195. Residues Phe-64–Phe-84 traverse the membrane as a helical segment. Over Arg-85 to Gly-95 the chain is Cytoplasmic. The helical transmembrane segment at Trp-96 to Leu-116 threads the bilayer. Topologically, residues Ala-117–Cys-129 are extracellular. A helical membrane pass occupies residues Ser-130–Leu-153. Residues Gly-154–Thr-166 are Cytoplasmic-facing. The chain crosses the membrane as a helical span at residues Leu-167–Ala-187. Over Ser-188 to Gln-207 the chain is Extracellular. A helical transmembrane segment spans residues Ala-208–Ala-228. The Cytoplasmic portion of the chain corresponds to Lys-229–Asn-244. The helical transmembrane segment at Ile-245–Leu-265 threads the bilayer. The Extracellular segment spans residues Val-266–Asn-287. A helical transmembrane segment spans residues Leu-288–Cys-308. The Cytoplasmic portion of the chain corresponds to His-309–Ser-336.

This sequence belongs to the G-protein coupled receptor 1 family. Atypical chemokine receptor subfamily.

The protein localises to the early endosome. Its subcellular location is the recycling endosome. It is found in the membrane. Its function is as follows. Atypical chemokine receptor that controls chemokine levels and localization via high-affinity chemokine binding that is uncoupled from classic ligand-driven signal transduction cascades, resulting instead in chemokine sequestration, degradation, or transcytosis. Also known as interceptor (internalizing receptor) or chemokine-scavenging receptor or chemokine decoy receptor. Has a promiscuous chemokine-binding profile, interacting with inflammatory chemokines of both the CXC and the CC subfamilies but not with homeostatic chemokines. Acts as a receptor for chemokines including CCL2, CCL5, CCL7, CCL11, CCL13, CCL14, CCL17, CXCL5, CXCL6, IL8/CXCL8, CXCL11, GRO, RANTES, MCP-1 and TARC. May regulate chemokine bioavailability and, consequently, leukocyte recruitment through two distinct mechanisms: when expressed in endothelial cells, it sustains the abluminal to luminal transcytosis of tissue-derived chemokines and their subsequent presentation to circulating leukocytes; when expressed in erythrocytes, serves as blood reservoir of cognate chemokines but also as a chemokine sink, buffering potential surges in plasma chemokine levels. This Papio hamadryas (Hamadryas baboon) protein is Atypical chemokine receptor 1 (ACKR1).